A 319-amino-acid polypeptide reads, in one-letter code: tRNA U34 carboxymethyltransferase (319 aa).

Carboxy-S-adenosyl-L-methionine is bound by residues Lys88, Trp102, Lys107, Gly126, Leu176–Glu177, Met192, Tyr196, and Arg311.

This sequence belongs to the class I-like SAM-binding methyltransferase superfamily. CmoB family. In terms of assembly, homotetramer.

The enzyme catalyses carboxy-S-adenosyl-L-methionine + 5-hydroxyuridine(34) in tRNA = 5-carboxymethoxyuridine(34) in tRNA + S-adenosyl-L-homocysteine + H(+). Catalyzes carboxymethyl transfer from carboxy-S-adenosyl-L-methionine (Cx-SAM) to 5-hydroxyuridine (ho5U) to form 5-carboxymethoxyuridine (cmo5U) at position 34 in tRNAs. The polypeptide is tRNA U34 carboxymethyltransferase (Azotobacter vinelandii (strain DJ / ATCC BAA-1303)).